The chain runs to 273 residues: Diadenylate cyclase (273 aa).

3 helical membrane passes run 12–32 (LANI…IMLI), 37–57 (AVQL…SGFF), and 61–81 (TVEW…IIIF). The DAC domain occupies 82–242 (QPELRRALET…GGELFRDVSE (161 aa)).

It belongs to the adenylate cyclase family. DacA/CdaA subfamily. In terms of assembly, probably a homodimer.

It localises to the cell membrane. It carries out the reaction 2 ATP = 3',3'-c-di-AMP + 2 diphosphate. In terms of biological role, catalyzes the condensation of 2 ATP molecules into cyclic di-AMP (c-di-AMP), a signaling compound secreted into the host's cytosol where it triggers the cytosolic surveillance pathway (CSP), a host pathway of innate immunity characterized by expression of beta interferon (IFN-beta) and coregulated genes. Overexpression increases export of c-di-AMP. c-di-AMP is a second messenger that mediates growth, cell wall stability and virulence. In Listeria monocytogenes serotype 1/2a (strain 10403S), this protein is Diadenylate cyclase.